Reading from the N-terminus, the 513-residue chain is ATP synthase subunit beta (513 aa).

A disordered region spans residues 1–29 (MATAPATEKKAPAKKAAAPKAAAPKKAAA). Over residues 14–29 (KKAAAPKAAAPKKAAA) the composition is skewed to low complexity. 186-193 (GGAGVGKT) contacts ATP.

Belongs to the ATPase alpha/beta chains family. In terms of assembly, F-type ATPases have 2 components, CF(1) - the catalytic core - and CF(0) - the membrane proton channel. CF(1) has five subunits: alpha(3), beta(3), gamma(1), delta(1), epsilon(1). CF(0) has three main subunits: a(1), b(2) and c(9-12). The alpha and beta chains form an alternating ring which encloses part of the gamma chain. CF(1) is attached to CF(0) by a central stalk formed by the gamma and epsilon chains, while a peripheral stalk is formed by the delta and b chains.

The protein localises to the cell inner membrane. It catalyses the reaction ATP + H2O + 4 H(+)(in) = ADP + phosphate + 5 H(+)(out). In terms of biological role, produces ATP from ADP in the presence of a proton gradient across the membrane. The catalytic sites are hosted primarily by the beta subunits. In Sphingopyxis alaskensis (strain DSM 13593 / LMG 18877 / RB2256) (Sphingomonas alaskensis), this protein is ATP synthase subunit beta.